The primary structure comprises 193 residues: dTTP/UTP pyrophosphatase (193 aa).

Asp71 acts as the Proton acceptor in catalysis.

The protein belongs to the Maf family. YhdE subfamily. Requires a divalent metal cation as cofactor.

The protein localises to the cytoplasm. It carries out the reaction dTTP + H2O = dTMP + diphosphate + H(+). The enzyme catalyses UTP + H2O = UMP + diphosphate + H(+). Its function is as follows. Nucleoside triphosphate pyrophosphatase that hydrolyzes dTTP and UTP. May have a dual role in cell division arrest and in preventing the incorporation of modified nucleotides into cellular nucleic acids. This chain is dTTP/UTP pyrophosphatase, found in Dictyoglomus thermophilum (strain ATCC 35947 / DSM 3960 / H-6-12).